The sequence spans 422 residues: Histidine--tRNA ligase (422 aa).

Belongs to the class-II aminoacyl-tRNA synthetase family. As to quaternary structure, homodimer.

The protein resides in the cytoplasm. It carries out the reaction tRNA(His) + L-histidine + ATP = L-histidyl-tRNA(His) + AMP + diphosphate + H(+). The sequence is that of Histidine--tRNA ligase from Syntrophomonas wolfei subsp. wolfei (strain DSM 2245B / Goettingen).